Here is a 131-residue protein sequence, read N- to C-terminus: D-ribose pyranase (131 aa).

Residue histidine 20 is the Proton donor of the active site. Substrate contacts are provided by residues aspartate 28, histidine 98, and 120–122 (YAN).

Belongs to the RbsD / FucU family. RbsD subfamily. In terms of assembly, homodecamer.

It is found in the cytoplasm. It carries out the reaction beta-D-ribopyranose = beta-D-ribofuranose. Its pathway is carbohydrate metabolism; D-ribose degradation; D-ribose 5-phosphate from beta-D-ribopyranose: step 1/2. In terms of biological role, catalyzes the interconversion of beta-pyran and beta-furan forms of D-ribose. In Clostridium perfringens (strain ATCC 13124 / DSM 756 / JCM 1290 / NCIMB 6125 / NCTC 8237 / Type A), this protein is D-ribose pyranase.